A 22-amino-acid polypeptide reads, in one-letter code: Zinc finger protein 326 (22 aa).

The segment at 1-22 (QGYGFNEPEQTRNQGGSSWEAP) is disordered. Residues 11–22 (TRNQGGSSWEAP) show a composition bias toward polar residues.

Belongs to the AKAP95 family.

The protein resides in the nucleus matrix. Its function is as follows. Probable transcriptional activator which may play a role in neuronal differentiation. Able to bind DNA and activate expression in vitro. This is Zinc finger protein 326 (Znf326) from Rattus norvegicus (Rat).